Here is a 97-residue protein sequence, read N- to C-terminus: Single insulin-like growth factor-binding domain protein-1 (97 aa).

The N-terminal stretch at 1–19 (MKTLFVFAVGIMLSMRASA) is a signal peptide. In terms of domain architecture, IGFBP N-terminal spans 20–96 (FTCPECRPEL…PEIVGTCVKI (77 aa)). Threonine 21 carries O-linked (GalNAc...) threonine glycosylation. 6 disulfide bridges follow: cysteine 22/cysteine 45, cysteine 25/cysteine 47, cysteine 30/cysteine 48, cysteine 36/cysteine 51, cysteine 59/cysteine 75, and cysteine 69/cysteine 93.

In terms of tissue distribution, expressed in hemocytes.

The protein resides in the secreted. Has a role in the innate immune system. This chain is Single insulin-like growth factor-binding domain protein-1, found in Cupiennius salei (American wandering spider).